A 278-amino-acid chain; its full sequence is MPELPEVETVARSLAPQLQGRTITGLAKLDWPKMLTPSPDEFAALIAGRRIEAIGRRAKWLLLSLDGEWTLAIHLRMSGQLLVAEPETSEARHVHFALDLDNGRRLIFNDQRKFGRVHLLDRQGLAALDAVHGPEPLAADFTPSALAERLQNRRAPIKALLLDQHLIAGIGNIYANEALWLARIHPLTPGAMLTPEQINELHHAIRHVLQEAITNQGSSLRNYRDGYGRQGTQQEHFNVYDRAGEPCPRCQSTIERIVVAQRSTYFCPTCQITMQQPE.

P2 (schiff-base intermediate with DNA) is an active-site residue. The Proton donor role is filled by E3. The Proton donor; for beta-elimination activity role is filled by K59. DNA contacts are provided by H93, R112, and R153. The FPG-type zinc finger occupies 238–272 (NVYDRAGEPCPRCQSTIERIVVAQRSTYFCPTCQI). Catalysis depends on R262, which acts as the Proton donor; for delta-elimination activity.

The protein belongs to the FPG family. In terms of assembly, monomer. It depends on Zn(2+) as a cofactor.

It carries out the reaction Hydrolysis of DNA containing ring-opened 7-methylguanine residues, releasing 2,6-diamino-4-hydroxy-5-(N-methyl)formamidopyrimidine.. The enzyme catalyses 2'-deoxyribonucleotide-(2'-deoxyribose 5'-phosphate)-2'-deoxyribonucleotide-DNA = a 3'-end 2'-deoxyribonucleotide-(2,3-dehydro-2,3-deoxyribose 5'-phosphate)-DNA + a 5'-end 5'-phospho-2'-deoxyribonucleoside-DNA + H(+). Involved in base excision repair of DNA damaged by oxidation or by mutagenic agents. Acts as a DNA glycosylase that recognizes and removes damaged bases. Has a preference for oxidized purines, such as 7,8-dihydro-8-oxoguanine (8-oxoG). Has AP (apurinic/apyrimidinic) lyase activity and introduces nicks in the DNA strand. Cleaves the DNA backbone by beta-delta elimination to generate a single-strand break at the site of the removed base with both 3'- and 5'-phosphates. This is Formamidopyrimidine-DNA glycosylase from Chloroflexus aurantiacus (strain ATCC 29366 / DSM 635 / J-10-fl).